The sequence spans 499 residues: Dipeptide and tripeptide permease A (499 aa).

Topologically, residues 1–34 are cytoplasmic; the sequence is MSTANKKPAESVSMNAFKQPRSFYLIFSIELWER. A helical membrane pass occupies residues 35–55; the sequence is FGFYGLQGIMAVYLVKQLGMS. Residues 56 to 59 lie on the Periplasmic side of the membrane; that stretch reads EADS. A helical membrane pass occupies residues 60–80; that stretch reads ITLFSSFSALVYGLVAIGGWL. The Cytoplasmic segment spans residues 81-89; the sequence is GDKVLGTKR. A helical transmembrane segment spans residues 90–110; that stretch reads VIMLGTIVLAIGYALVAWSGH. A topological domain (periplasmic) is located at residue Asp-111. Residues 112–132 form a helical membrane-spanning segment; sequence AAIVYFGMATIAVGNGLFKAN. The Cytoplasmic segment spans residues 133 to 153; sequence PSALLSTCYEKDDPRLDGAFT. The helical transmembrane segment at 154–174 threads the bilayer; that stretch reads MYYMAINIGSFFSMLATPWLA. Residues 175–178 lie on the Periplasmic side of the membrane; that stretch reads EKFG. A helical membrane pass occupies residues 179-199; that stretch reads WSVAFSLSFVGMLITLVNFIF. The Cytoplasmic portion of the chain corresponds to 200–217; sequence CKKWVKDYGSKPDFAPLH. The helical transmembrane segment at 218–238 threads the bilayer; that stretch reads VGKLLATIVGIVVLVAIATWL. The Periplasmic portion of the chain corresponds to 239–246; that stretch reads LHNQGIAR. Residues 247 to 267 form a helical membrane-spanning segment; that stretch reads LVLGVVALGIVIIFAKEAFAM. Topologically, residues 268 to 274 are cytoplasmic; sequence QGAARRK. The helical transmembrane segment at 275–295 threads the bilayer; it reads MIVAFILMLEAIVFFVLYQQM. Residues 296–320 are Periplasmic-facing; that stretch reads PTSLNFFAIRNVEHSILGIAFQPEQ. A helical membrane pass occupies residues 321–341; sequence FQALNPFWIMIGSPILAAIYN. Topologically, residues 342–350 are cytoplasmic; sequence KMGDRLPMP. A helical membrane pass occupies residues 351–371; it reads FKFTIGMLLCSGAFLVLPLGA. Residues 372-383 are Periplasmic-facing; sequence KFASEAGIVSVN. The chain crosses the membrane as a helical span at residues 384–404; it reads WLILSYALQSIGELMISGLGL. Residues 405-414 are Cytoplasmic-facing; it reads AMVAQLVPQR. A helical membrane pass occupies residues 415 to 435; it reads LMGFIMGSWFLTTAGAAMIAG. The Periplasmic portion of the chain corresponds to 436 to 459; it reads KVANLMAVPENVSDPLQSLEVYGR. A helical membrane pass occupies residues 460–480; that stretch reads VFMQIGIATGVIAVLMLLTAP. At 481 to 499 the chain is on the cytoplasmic side; that stretch reads LLNRMTQEDKPKETDTAHA.

This sequence belongs to the major facilitator superfamily. Proton-dependent oligopeptide transporter (POT/PTR) (TC 2.A.17) family. DtpA subfamily.

It is found in the cell inner membrane. Proton-dependent permease that transports di- and tripeptides. The polypeptide is Dipeptide and tripeptide permease A (Cronobacter turicensis (strain DSM 18703 / CCUG 55852 / LMG 23827 / z3032)).